We begin with the raw amino-acid sequence, 413 residues long: Probable alpha-amylase 2 (413 aa).

Substrate contacts are provided by residues 74–75 and 191–196; these read YL and RFDFAR. The Nucleophile role is filled by aspartate 193. Catalysis depends on glutamate 218, which acts as the Proton donor. Substrate contacts are provided by residues tryptophan 220, serine 222, glutamine 239, aspartate 246, lysine 280, 286-288, histidine 299, glutamine 305, lysine 386, and tryptophan 411; that span reads GWW.

This sequence belongs to the glycosyl hydrolase 13 family. It depends on Ca(2+) as a cofactor. In terms of tissue distribution, expressed in developing siliques.

It is found in the cytoplasm. The protein localises to the cytosol. It carries out the reaction Endohydrolysis of (1-&gt;4)-alpha-D-glucosidic linkages in polysaccharides containing three or more (1-&gt;4)-alpha-linked D-glucose units.. In terms of biological role, probable alpha-amylase that does not seem to be required for breakdown of transitory starch in leaves. In Arabidopsis thaliana (Mouse-ear cress), this protein is Probable alpha-amylase 2 (AMY2).